The sequence spans 65 residues: Large ribosomal subunit protein bL32 (65 aa).

A compositionally biased stretch (basic residues) spans 1 to 19 (MAIVPKRKTSKQRKHKRQS). The tract at residues 1–21 (MAIVPKRKTSKQRKHKRQSHS) is disordered.

The protein belongs to the bacterial ribosomal protein bL32 family.

The chain is Large ribosomal subunit protein bL32 from Mesomycoplasma hyopneumoniae (strain 7448) (Mycoplasma hyopneumoniae).